The chain runs to 688 residues: Homoaconitase, mitochondrial (688 aa).

Residues Cys335, Cys395, and Cys398 each coordinate [4Fe-4S] cluster. The disordered stretch occupies residues Ser468–Ala494.

Belongs to the aconitase/IPM isomerase family. [4Fe-4S] cluster serves as cofactor.

It localises to the mitochondrion. The enzyme catalyses (2R,3S)-homoisocitrate = cis-homoaconitate + H2O. The protein operates within amino-acid biosynthesis; L-lysine biosynthesis via AAA pathway; L-alpha-aminoadipate from 2-oxoglutarate: step 3/5. In terms of biological role, catalyzes the reversible hydration of cis-homoaconitate to (2R,3S)-homoisocitrate, a step in the alpha-aminoadipate pathway for lysine biosynthesis. In Candida parapsilosis (Yeast), this protein is Homoaconitase, mitochondrial (LYS4).